A 794-amino-acid chain; its full sequence is EVI5-like protein (794 aa).

Polar residues predominate over residues 1–30 (MASPTLSPDSSSQEALSAPTCSPTSDSENL). Disordered stretches follow at residues 1-36 (MASP…DELE) and 49-75 (EADS…SSSA). A compositionally biased stretch (low complexity) spans 55–75 (MRSMNGSRRNSGSSLVSSSSA). The Rab-GAP TBC domain maps to 115-300 (GIPHHFRAIV…RVFDIFMYEG (186 aa)). Coiled-coil stretches lie at residues 358–449 (KKMK…QQEN) and 569–709 (EAQA…LKGP). Residue serine 685 is modified to Phosphoserine. The segment at 766–794 (LERPAKDSEGSSDSDADELAAPYSQGLDN) is disordered.

May interact with RAB10.

In terms of biological role, functions as a GTPase-activating protein (GAP) with a broad specificity. In Homo sapiens (Human), this protein is EVI5-like protein (EVI5L).